Reading from the N-terminus, the 629-residue chain is Filament-like plant protein 2 (629 aa).

2 coiled-coil regions span residues 34–61 (WEKA…LEDR) and 102–171 (NTGL…LEAE). The segment at 186–205 (SSNQSVDSHSDGGRERVEGS) is disordered. Residues 193–203 (SHSDGGRERVE) show a composition bias toward basic and acidic residues. Residues 270–493 (ELSLMEKLEK…IEEKTMIKRE (224 aa)) adopt a coiled-coil conformation.

Belongs to the FPP family. As to quaternary structure, interacts with WPP/MAF proteins. Binds to COG2; this interaction promotes the association between cortical microtubules and EXO70A1. Accumulates in preferentially xylem cells.

It localises to the vesicle. Functionally, ensures, when in complex with FPP3/VETH1 and COG2, the correct secondary cell wall (SCW) deposition pattern by recruiting exocyst components to cortical microtubules in xylem cells during secondary cell wall deposition by recruiting EXO70A1. This is Filament-like plant protein 2 from Arabidopsis thaliana (Mouse-ear cress).